Consider the following 329-residue polypeptide: rRNA 2'-O-methyltransferase fibrillarin (329 aa).

The disordered stretch occupies residues 1-85 (MAFGAPRGRG…GGARGGARGG (85 aa)). Positions 13–84 (RGGFGGRGGS…RGGARGGARG (72 aa)) are enriched in gly residues. S-adenosyl-L-methionine is bound by residues 181-182 (TS), 200-201 (EF), 225-226 (DA), and 245-248 (DVAQ).

It belongs to the methyltransferase superfamily. Fibrillarin family. In terms of assembly, component of box C/D small nucleolar ribonucleoprotein (snoRNP) particles that contain SNU13, NOP1, SIK1/NOP56 and NOP58, plus a guide RNA. In terms of processing, by homology to other fibrillarins, some or all of the N-terminal domain arginines are modified to asymmetric dimethylarginine (DMA).

It is found in the nucleus. Its subcellular location is the nucleolus. It carries out the reaction L-glutaminyl-[histone H2A] + S-adenosyl-L-methionine = N(5)-methyl-L-glutaminyl-[histone H2A] + S-adenosyl-L-homocysteine + H(+). S-adenosyl-L-methionine-dependent methyltransferase that has the ability to methylate both RNAs and proteins. Involved in pre-rRNA processing. Utilizes the methyl donor S-adenosyl-L-methionine to catalyze the site-specific 2'-hydroxyl methylation of ribose moieties in pre-ribosomal RNA. Site specificity is provided by a guide RNA that base pairs with the substrate. Methylation occurs at a characteristic distance from the sequence involved in base pairing with the guide RNA. Also acts as a protein methyltransferase by mediating methylation of 'Gln-105' of histone H2A (H2AQ105me), a modification that impairs binding of the FACT complex and is specifically present at 35S ribosomal DNA locus. The sequence is that of rRNA 2'-O-methyltransferase fibrillarin (NOP1) from Debaryomyces hansenii (strain ATCC 36239 / CBS 767 / BCRC 21394 / JCM 1990 / NBRC 0083 / IGC 2968) (Yeast).